The sequence spans 242 residues: Zinc import ATP-binding protein ZnuC (242 aa).

Residues 24–241 (INVKNLSFFY…EKFLKMFSSY (218 aa)) enclose the ABC transporter domain. 56-63 (GPNGGGKT) contacts ATP.

Belongs to the ABC transporter superfamily. Zinc importer (TC 3.A.1.15.5) family. As to quaternary structure, the complex is composed of two ATP-binding proteins (ZnuC), two transmembrane proteins (ZnuB) and a solute-binding protein (ZnuA).

It localises to the cell inner membrane. It catalyses the reaction Zn(2+)(out) + ATP(in) + H2O(in) = Zn(2+)(in) + ADP(in) + phosphate(in) + H(+)(in). Its function is as follows. Part of the ABC transporter complex ZnuABC involved in zinc import. Responsible for energy coupling to the transport system. This Ehrlichia canis (strain Jake) protein is Zinc import ATP-binding protein ZnuC.